The chain runs to 645 residues: Threonine--tRNA ligase (645 aa).

One can recognise a TGS domain in the interval 1 to 63 (MDQIKIKFPD…ESDGDIEIVT (63 aa)). The segment at 242–540 (DHRKIGKELE…LTEETKGAFP (299 aa)) is catalytic. The Zn(2+) site is built by C336, H387, and H517.

This sequence belongs to the class-II aminoacyl-tRNA synthetase family. Homodimer. The cofactor is Zn(2+).

It localises to the cytoplasm. It carries out the reaction tRNA(Thr) + L-threonine + ATP = L-threonyl-tRNA(Thr) + AMP + diphosphate + H(+). Functionally, catalyzes the attachment of threonine to tRNA(Thr) in a two-step reaction: L-threonine is first activated by ATP to form Thr-AMP and then transferred to the acceptor end of tRNA(Thr). Also edits incorrectly charged L-seryl-tRNA(Thr). The sequence is that of Threonine--tRNA ligase from Staphylococcus saprophyticus subsp. saprophyticus (strain ATCC 15305 / DSM 20229 / NCIMB 8711 / NCTC 7292 / S-41).